Here is a 377-residue protein sequence, read N- to C-terminus: RING finger protein 215 (377 aa).

The Cytoplasmic segment spans residues 1–22; the sequence is MGPAARPALRSPPPPPPPPPSP. A disordered region spans residues 1-22; sequence MGPAARPALRSPPPPPPPPPSP. Pro residues predominate over residues 10 to 22; sequence RSPPPPPPPPPSP. A helical transmembrane segment spans residues 23–43; the sequence is LLLLLPLLPLWLGLAGPGAAA. The Extracellular segment spans residues 44 to 250; the sequence is DGSEPAAGAG…GGSRAQEQKP (207 aa). An N-linked (GlcNAc...) asparagine glycan is attached at Asn186. Residues 251 to 271 traverse the membrane as a helical segment; sequence LQQLWNAILLVAMLLCTGLVV. Topologically, residues 272–377 are cytoplasmic; sequence QAQRQASRQS…NVLGNRYSDD (106 aa). Residues 325 to 366 form an RING-type; atypical zinc finger; sequence CAVCLDYFCNKQWLRVLPCKHEFHRDCVDPWLMLQQTCPLCK.

It localises to the membrane. This is RING finger protein 215 (RNF215) from Homo sapiens (Human).